The sequence spans 256 residues: Triosephosphate isomerase (256 aa).

Position 10–12 (10–12) interacts with substrate; that stretch reads NWK. Catalysis depends on histidine 99, which acts as the Electrophile. The active-site Proton acceptor is glutamate 171. Residues glycine 177, serine 216, and 237 to 238 each bind substrate; that span reads GG.

It belongs to the triosephosphate isomerase family. In terms of assembly, homodimer.

The protein resides in the cytoplasm. The enzyme catalyses D-glyceraldehyde 3-phosphate = dihydroxyacetone phosphate. Its pathway is carbohydrate biosynthesis; gluconeogenesis. The protein operates within carbohydrate degradation; glycolysis; D-glyceraldehyde 3-phosphate from glycerone phosphate: step 1/1. Involved in the gluconeogenesis. Catalyzes stereospecifically the conversion of dihydroxyacetone phosphate (DHAP) to D-glyceraldehyde-3-phosphate (G3P). The chain is Triosephosphate isomerase from Colwellia psychrerythraea (strain 34H / ATCC BAA-681) (Vibrio psychroerythus).